An 87-amino-acid chain; its full sequence is UPF0250 protein PC1_1177 (87 aa).

It belongs to the UPF0250 family.

This chain is UPF0250 protein PC1_1177, found in Pectobacterium carotovorum subsp. carotovorum (strain PC1).